Here is a 461-residue protein sequence, read N- to C-terminus: Spermidine/putrescine import ATP-binding protein PotA (461 aa).

Positions 10-240 constitute an ABC transporter domain; sequence IEVNGVSKFF…PINSFVADFI (231 aa). 42–49 is an ATP binding site; the sequence is GPSGCGKT.

Belongs to the ABC transporter superfamily. Spermidine/putrescine importer (TC 3.A.1.11.1) family. In terms of assembly, the complex is composed of two ATP-binding proteins (PotA), two transmembrane proteins (PotB and PotC) and a solute-binding protein (PotD).

It localises to the cell inner membrane. The catalysed reaction is ATP + H2O + polyamine-[polyamine-binding protein]Side 1 = ADP + phosphate + polyamineSide 2 + [polyamine-binding protein]Side 1.. In terms of biological role, part of the ABC transporter complex PotABCD involved in spermidine/putrescine import. Responsible for energy coupling to the transport system. In Bacteroides fragilis (strain YCH46), this protein is Spermidine/putrescine import ATP-binding protein PotA.